A 615-amino-acid chain; its full sequence is Elongation factor 4 (615 aa).

The region spanning 14–200 (SKIRNFCIIA…KVAELIPAPT (187 aa)) is the tr-type G domain. Residues 26 to 31 (DHGKST) and 147 to 150 (NKID) each bind GTP.

The protein belongs to the TRAFAC class translation factor GTPase superfamily. Classic translation factor GTPase family. LepA subfamily.

Its subcellular location is the cell membrane. The enzyme catalyses GTP + H2O = GDP + phosphate + H(+). Required for accurate and efficient protein synthesis under certain stress conditions. May act as a fidelity factor of the translation reaction, by catalyzing a one-codon backward translocation of tRNAs on improperly translocated ribosomes. Back-translocation proceeds from a post-translocation (POST) complex to a pre-translocation (PRE) complex, thus giving elongation factor G a second chance to translocate the tRNAs correctly. Binds to ribosomes in a GTP-dependent manner. This is Elongation factor 4 from Corynebacterium aurimucosum (strain ATCC 700975 / DSM 44827 / CIP 107346 / CN-1) (Corynebacterium nigricans).